The chain runs to 197 residues: Recombination protein RecR (197 aa).

A C4-type zinc finger spans residues 56–71 (CNVCFHFSADPICEIC). The 95-residue stretch at 79 to 173 (QTICVVADSR…KVTRIAFGLP (95 aa)) folds into the Toprim domain.

It belongs to the RecR family.

In terms of biological role, may play a role in DNA repair. It seems to be involved in an RecBC-independent recombinational process of DNA repair. It may act with RecF and RecO. The protein is Recombination protein RecR of Rippkaea orientalis (strain PCC 8801 / RF-1) (Cyanothece sp. (strain PCC 8801)).